The following is a 261-amino-acid chain: Aromatic peroxygenase (261 aa).

Cysteine 36 provides a ligand contact to heme. Residues asparagine 100, asparagine 137, asparagine 141, and asparagine 220 are each glycosylated (N-linked (GlcNAc...) asparagine).

Belongs to the chloroperoxidase family. It depends on heme b as a cofactor. N-glycosylated.

Functionally, aromatic peroxidase that oxidizes aryl alcohols into the corresponding aldehydes and then into the corresponding benzoic acids. Catalyzes the regioselective peroxide-dependent hydroxylation of naphthalene to 1-naphthol and to a far lesser extent 2-naphthol via a naphthalene 1,2-oxide intermediate. Halogenates phenol to 2-bromophenol and 4-bromophenol. Oxidizes the sulfur-containing heterocycle dibenzothiophene to yield sulfoxidation products, and trace amounts of ring-hydroxylation products. This Coprinellus radians (Coprophilous mushroom) protein is Aromatic peroxygenase.